Here is a 479-residue protein sequence, read N- to C-terminus: Transcript termination protein A18 (479 aa).

The Helicase ATP-binding domain maps to 99-255; that stretch reads KNKHKRPTYI…NDIINVSNSL (157 aa). 112-119 provides a ligand contact to ATP; it reads LACGFGKT. The DESH box motif lies at 205 to 208; the sequence is DESH. The Helicase C-terminal domain occupies 308–469; the sequence is ILDTIIYDFN…EKKGKKKELA (162 aa).

It belongs to the helicase family. Poxviruses subfamily. In terms of assembly, interacts with G2. Might be part of a transcription complex composed at least of G2, A18, and H5.

The protein resides in the virion. DNA helicase which seems to act as a postreplicative transcription termination factor. Involved in ATP-dependent release of nascent RNA. Forms a stable complex with single-stranded DNA, and to a lesser extent RNA. The sequence is that of Transcript termination protein A18 from Homo sapiens (Human).